Reading from the N-terminus, the 105-residue chain is Small ribosomal subunit protein uS10 (105 aa).

Belongs to the universal ribosomal protein uS10 family. Part of the 30S ribosomal subunit.

In terms of biological role, involved in the binding of tRNA to the ribosomes. The sequence is that of Small ribosomal subunit protein uS10 from Phytoplasma australiense.